The sequence spans 551 residues: Chloride channel CLIC-like protein 1 (551 aa).

Positions 1-18 (MLCSLLLCECLLLVAGYA) are cleaved as a signal peptide. Residues 19 to 184 (HDDDWIDPTD…EDSFGVDPYN (166 aa)) are Lumenal-facing. The helical transmembrane segment at 185-205 (VLMVLLCLLCIVVLVATELWT) threads the bilayer. At 206 to 216 (YVRWYTQLRRV) the chain is on the cytoplasmic side. Residues 217 to 237 (LIISFLFSLGWNWMYLYKLAF) form a helical membrane-spanning segment. The Lumenal segment spans residues 238–329 (AQHQAEVAKM…GEFIKALMKE (92 aa)). Residues 330-350 (IPALLHLPVLIIMALAILSFC) form a helical membrane-spanning segment. Residues 351–551 (YGAGKSVHVL…GQDPVSSPCG (201 aa)) lie on the Cytoplasmic side of the membrane. The segment at 363-415 (IGGPESEPPQALRPRDRRRQEEIDYRPDGGAGDADFHYRGQMGPTEQGPYAKT) is disordered. Residues 380 to 389 (RRQEEIDYRP) are compositionally biased toward basic and acidic residues. Phosphoserine is present on residues Ser-438 and Ser-464. The segment at 447-551 (VPDAEAREHP…GQDPVSSPCG (105 aa)) is disordered. Residue Thr-482 is modified to Phosphothreonine. The segment covering 488–508 (TESSQSAKPVSGQDTSGNTEG) has biased composition (polar residues). Ser-509, Ser-524, and Ser-532 each carry phosphoserine.

This sequence belongs to the chloride channel MCLC family. In terms of assembly, homomultimers. Interacts with mitochondrial protein PIGBOS1 (via C-terminus); the interaction occurs at the mitochondria-associated endoplasmic reticulum (ER) membrane, a zone of contact between the ER and mitochondrial membranes, but does not appear to play a role in ER-mitochondria tethering and is not affected by ER stress. Interacts with CALR. In terms of tissue distribution, expressed in the retina of the eye, with extensive expression in the lamina cribrosa, optic nerve, ganglion cell layer, inner nuclear layer, outer nuclear layer and retinal pigment epithelium.

The protein resides in the endoplasmic reticulum membrane. It catalyses the reaction chloride(in) = chloride(out). The catalysed reaction is bromide(in) = bromide(out). It carries out the reaction nitrate(in) = nitrate(out). The enzyme catalyses fluoride(in) = fluoride(out). Its activity is regulated as follows. Inhibited by ER lumenal Ca(2+). Anion-selective channel with Ca(2+)-dependent and voltage-independent gating. Permeable to small monovalent anions with selectivity for bromide &gt; chloride &gt; nitrate &gt; fluoride. Operates in the endoplasmic reticulum (ER) membrane where it mediates chloride efflux to compensate for the loss of positive charges from the ER lumen upon Ca(2+) release. Contributes to the maintenance of ER Ca(2+) pools and activation of unfolded protein response to prevent accumulation of misfolded proteins in the ER lumen. Particularly involved in ER homeostasis mechanisms underlying motor neurons and retinal photoreceptors survival. This Homo sapiens (Human) protein is Chloride channel CLIC-like protein 1.